The primary structure comprises 233 residues: Protein AC81 (233 aa).

Transmembrane regions (helical) follow at residues 171-191 (SFQT…VEKF) and 194-214 (INLL…NYII).

The protein localises to the host nucleus. It is found in the host membrane. Its subcellular location is the virion. Plays an essential role in the assembly of nucleocapsids with envelopes. This chain is Protein AC81 (AC81), found in Autographa californica nuclear polyhedrosis virus (AcMNPV).